Here is a 64-residue protein sequence, read N- to C-terminus: DNA gyrase inhibitor YacG (64 aa).

Zn(2+) contacts are provided by Cys9, Cys12, Cys28, and Cys32. The tract at residues 45–64 (KRIPSSGDLSESDDWSEEPK) is disordered. The segment covering 54 to 64 (SESDDWSEEPK) has biased composition (acidic residues).

Belongs to the DNA gyrase inhibitor YacG family. As to quaternary structure, interacts with GyrB. Requires Zn(2+) as cofactor.

In terms of biological role, inhibits all the catalytic activities of DNA gyrase by preventing its interaction with DNA. Acts by binding directly to the C-terminal domain of GyrB, which probably disrupts DNA binding by the gyrase. This is DNA gyrase inhibitor YacG from Escherichia fergusonii (strain ATCC 35469 / DSM 13698 / CCUG 18766 / IAM 14443 / JCM 21226 / LMG 7866 / NBRC 102419 / NCTC 12128 / CDC 0568-73).